The following is a 138-amino-acid chain: ATP synthase epsilon chain (138 aa).

This sequence belongs to the ATPase epsilon chain family. As to quaternary structure, F-type ATPases have 2 components, CF(1) - the catalytic core - and CF(0) - the membrane proton channel. CF(1) has five subunits: alpha(3), beta(3), gamma(1), delta(1), epsilon(1). CF(0) has three main subunits: a, b and c.

The protein localises to the cell membrane. In terms of biological role, produces ATP from ADP in the presence of a proton gradient across the membrane. This Streptococcus equi subsp. zooepidemicus (strain H70) protein is ATP synthase epsilon chain.